A 151-amino-acid polypeptide reads, in one-letter code: MKAICIISGDVHGKIYFQQESANQPLKISGYLLNLPRGLHGFHVHEYGDTSNGCTSAGEHFNPTNEDHGAPDAEIRHVGDLGNIKSAGYNSLTEVNMMDNVMSLYGPHNIIGRSLVVHTDKDDLGLTDHPLSKTTGNSGGRLGCGIIAICK.

The Cu cation site is built by H43, H45, and H60. Residues C54 and C144 are joined by a disulfide bond. The Zn(2+) site is built by H60, H68, H77, and D80. Cu cation is bound at residue H118.

It belongs to the Cu-Zn superoxide dismutase family. Requires Cu cation as cofactor. Zn(2+) serves as cofactor.

The enzyme catalyses 2 superoxide + 2 H(+) = H2O2 + O2. In terms of biological role, nonessential for normal virus replication. Could be either non-functional or with a low activity. The protein is Putative superoxide dismutase [Cu-Zn] (SOD) of Lepidoptera (butterflies and moths).